The sequence spans 241 residues: Major microneme antigen (241 aa).

Positions 1–34 are cleaved as a signal peptide; sequence MTLPIHFPRCVLYGMASAVWSILFLHILVGDTMS. Residues 35 to 103 constitute a propeptide that is removed on maturation; that stretch reads AADALSWSGG…ATGRGPSFVH (69 aa). The span at 64–83 shows a compositional bias: basic and acidic residues; it reads GKELEQQHGGEEQQMQRDTK. Residues 64 to 90 are disordered; sequence GKELEQQHGGEEQQMQRDTKPAAFSNP. PAN domains lie at 112-181 and 185-241; these read CFPH…PRSC and CTDN…VERA. Cystine bridges form between C112/C181, C137/C159, C141/C147, C185/C189, C210/C230, and C214/C220. S121 serves as a coordination point for a carbohydrate. A carbohydrate is bound by residues K162, Y169, and D174.

It belongs to the microneme antigen family. In terms of assembly, homodimer or heterodimer of major microneme antigen and microneme antigen. Contains six disulfide bonds.

The protein resides in the cytoplasmic vesicle. Its subcellular location is the secretory vesicle. It localises to the microneme. Its function is as follows. Galactose-binding lectin. Plays a role in adhesion to the host cell. Has a potential role in invasion of host cells. The chain is Major microneme antigen from Sarcocystis muris.